A 25-amino-acid polypeptide reads, in one-letter code: ATP-dependent 6-phosphofructokinase 2 (25 aa).

Gly-11 contacts ATP.

This sequence belongs to the phosphofructokinase type A (PFKA) family. ATP-dependent PFK group I subfamily. Prokaryotic clade 'B1' sub-subfamily. As to quaternary structure, homotetramer. It depends on Mg(2+) as a cofactor.

The protein resides in the cytoplasm. The enzyme catalyses beta-D-fructose 6-phosphate + ATP = beta-D-fructose 1,6-bisphosphate + ADP + H(+). Its pathway is carbohydrate degradation; glycolysis; D-glyceraldehyde 3-phosphate and glycerone phosphate from D-glucose: step 3/4. In contrast with PFK1 this enzyme is not affected by phosphoenolpyruvate. In terms of biological role, catalyzes the phosphorylation of D-fructose 6-phosphate to fructose 1,6-bisphosphate by ATP, the first committing step of glycolysis. The protein is ATP-dependent 6-phosphofructokinase 2 (pfkA2) of Thermus thermophilus (strain ATCC 27634 / DSM 579 / HB8).